We begin with the raw amino-acid sequence, 356 residues long: Histidinol-phosphate aminotransferase (356 aa).

The residue at position 214 (K214) is an N6-(pyridoxal phosphate)lysine.

It belongs to the class-II pyridoxal-phosphate-dependent aminotransferase family. Histidinol-phosphate aminotransferase subfamily. As to quaternary structure, homodimer. It depends on pyridoxal 5'-phosphate as a cofactor.

The enzyme catalyses L-histidinol phosphate + 2-oxoglutarate = 3-(imidazol-4-yl)-2-oxopropyl phosphate + L-glutamate. The protein operates within amino-acid biosynthesis; L-histidine biosynthesis; L-histidine from 5-phospho-alpha-D-ribose 1-diphosphate: step 7/9. In Shigella boydii serotype 4 (strain Sb227), this protein is Histidinol-phosphate aminotransferase.